A 75-amino-acid chain; its full sequence is Small ribosomal subunit protein bS18 (75 aa).

Belongs to the bacterial ribosomal protein bS18 family. Part of the 30S ribosomal subunit. Forms a tight heterodimer with protein bS6.

Functionally, binds as a heterodimer with protein bS6 to the central domain of the 16S rRNA, where it helps stabilize the platform of the 30S subunit. This is Small ribosomal subunit protein bS18 from Roseobacter denitrificans (strain ATCC 33942 / OCh 114) (Erythrobacter sp. (strain OCh 114)).